Consider the following 166-residue polypeptide: Small ribosomal subunit protein uS5 (166 aa).

Residues 12-75 enclose the S5 DRBM domain; it reads YIEKLVQVNR…EAARRNMIQV (64 aa).

This sequence belongs to the universal ribosomal protein uS5 family. As to quaternary structure, part of the 30S ribosomal subunit. Contacts proteins S4 and S8.

With S4 and S12 plays an important role in translational accuracy. Its function is as follows. Located at the back of the 30S subunit body where it stabilizes the conformation of the head with respect to the body. This chain is Small ribosomal subunit protein uS5, found in Pseudomonas fluorescens (strain SBW25).